A 455-amino-acid polypeptide reads, in one-letter code: uncharacterized protein (455 aa).

11 helical membrane-spanning segments follow: residues 26-46 (FGPG…QLLI), 53-73 (GAWG…ISIG), 77-97 (LGVM…RSTA), 111-131 (WVVA…LAVI), 146-166 (ALRA…TGVW), 191-211 (AAGV…SLVV), 232-252 (LTVL…AIAV), 256-276 (AHIG…IPAL), 278-298 (ILAA…LIVG), 323-343 (LLVA…GGGG), and 357-377 (ALVL…VVIA). Residues 384–455 (PKRLRPAPPV…LSDEPPPRAD (72 aa)) are disordered.

The protein localises to the cell membrane. This is an uncharacterized protein from Mycobacterium tuberculosis (strain CDC 1551 / Oshkosh).